A 326-amino-acid chain; its full sequence is GTP cyclohydrolase MptA (326 aa).

It belongs to the GTP cyclohydrolase IV family. In terms of assembly, homodimer. Fe(2+) is required as a cofactor.

The catalysed reaction is GTP + H2O = 7,8-dihydroneopterin 2',3'-cyclic phosphate + formate + diphosphate + H(+). The protein operates within cofactor biosynthesis; 5,6,7,8-tetrahydromethanopterin biosynthesis. Its function is as follows. Converts GTP to 7,8-dihydro-D-neopterin 2',3'-cyclic phosphate, the first intermediate in the biosynthesis of coenzyme methanopterin. This is GTP cyclohydrolase MptA from Methanoregula boonei (strain DSM 21154 / JCM 14090 / 6A8).